The chain runs to 502 residues: Alpha-globin transcription factor CP2 (502 aa).

The Grh/CP2 DB domain maps to 61-300 (ENKILPFQYV…SPGFNSSHSS (240 aa)). Positions 133 to 395 (EHQQLEGWRW…VRPRLTIYVC (263 aa)) are DNA-binding. 2 disordered regions span residues 238-268 (FKPKGADRKQKTDREKMEKRTPHEKEKYQPS) and 294-325 (FNSSHSSFSLGEGNGSPNHQPEPPPPVTDNLL). Over residues 241–265 (KGADRKQKTDREKMEKRTPHEKEKY) the composition is skewed to basic and acidic residues. Serine 353 bears the Phosphoserine mark.

The protein belongs to the grh/CP2 family. CP2 subfamily. In terms of assembly, binds to DNA as a dimer, isoform 3 does not bind to DNA or affect the binding of isoform 1 to DNA. Interacts with UBP1 and PIAS1, and is probably part of a complex containing TFCP2, UBP1 and PIAS1. Component of the SSP (stage selector protein) complex, which appears to be a heteromer of TFCP2 and 2 copies of NFE4. In terms of tissue distribution, ubiquitous. Expressed in brain, ovary, kidney, thymus, spleen, liver, adrenal, heart and lung (at protein level).

The protein localises to the nucleus. Functionally, binds a variety of cellular and viral promoters including fibrinogen, alpha-globin, SV40 and HIV-1 promoters. Activation of the alpha-globin promoter in erythroid cells is via synergistic interaction with UBP1. Functions as part of the SSP (stage selector protein) complex. Facilitates the interaction of the gamma-globin genes with enhancer elements contained in the locus control region in fetal erythroid cells. Interacts by binding to the stage selector element (SSE) in the proximal gamma-globin promoter. This chain is Alpha-globin transcription factor CP2 (TFCP2), found in Homo sapiens (Human).